A 315-amino-acid polypeptide reads, in one-letter code: 4-diphosphocytidyl-2-C-methyl-D-erythritol kinase (315 aa).

Residue Lys-26 is part of the active site. 111 to 121 (PLAGGLAGGSA) provides a ligand contact to ATP. Residue Asp-153 is part of the active site.

Belongs to the GHMP kinase family. IspE subfamily.

The enzyme catalyses 4-CDP-2-C-methyl-D-erythritol + ATP = 4-CDP-2-C-methyl-D-erythritol 2-phosphate + ADP + H(+). The protein operates within isoprenoid biosynthesis; isopentenyl diphosphate biosynthesis via DXP pathway; isopentenyl diphosphate from 1-deoxy-D-xylulose 5-phosphate: step 3/6. In terms of biological role, catalyzes the phosphorylation of the position 2 hydroxy group of 4-diphosphocytidyl-2C-methyl-D-erythritol. In Salinispora tropica (strain ATCC BAA-916 / DSM 44818 / JCM 13857 / NBRC 105044 / CNB-440), this protein is 4-diphosphocytidyl-2-C-methyl-D-erythritol kinase.